The primary structure comprises 335 residues: Mitochondrial amidoxime reducing component 2 (335 aa).

The N-terminal 35 residues, Met1–Leu35, are a transit peptide targeting the mitochondrion. Glycyl lysine isopeptide (Lys-Gly) (interchain with G-Cter in ubiquitin) cross-links involve residues Lys59, Lys138, and Lys144. Lys156 bears the N6-acetyllysine; alternate mark. Lys156 participates in a covalent cross-link: Glycyl lysine isopeptide (Lys-Gly) (interchain with G-Cter in ubiquitin); alternate. Residues Lys166, Lys173, Lys187, Lys287, and Lys294 each participate in a glycyl lysine isopeptide (Lys-Gly) (interchain with G-Cter in ubiquitin) cross-link. The region spanning Gly188–Met334 is the MOSC domain.

As to quaternary structure, component of a complex composed of cytochrome b5, NADH-cytochrome b5 reductase (CYB5R3) and MTARC2. It depends on Mo-molybdopterin as a cofactor. Ubiquitinated by PRKN during mitophagy, leading to its degradation and enhancement of mitophagy. Deubiquitinated by USP30.

The protein resides in the mitochondrion outer membrane. It localises to the peroxisome. The enzyme catalyses N(omega)-hydroxy-L-arginine + 2 Fe(II)-[cytochrome b5] + 2 H(+) = L-arginine + 2 Fe(III)-[cytochrome b5] + H2O. Catalyzes the reduction of N-oxygenated molecules, acting as a counterpart of cytochrome P450 and flavin-containing monooxygenases in metabolic cycles. As a component of prodrug-converting system, reduces a multitude of N-hydroxylated prodrugs particularly amidoximes, leading to increased drug bioavailability. May be involved in mitochondrial N(omega)-hydroxy-L-arginine (NOHA) reduction, regulating endogenous nitric oxide levels and biosynthesis. Postulated to cleave the N-OH bond of N-hydroxylated substrates in concert with electron transfer from NADH to cytochrome b5 reductase then to cytochrome b5, the ultimate electron donor that primes the active site for substrate reduction. The polypeptide is Mitochondrial amidoxime reducing component 2 (Homo sapiens (Human)).